We begin with the raw amino-acid sequence, 758 residues long: 5-methyltetrahydropteroyltriglutamate--homocysteine methyltransferase (758 aa).

5-methyltetrahydropteroyltri-L-glutamate is bound by residues 16-19 (RELK) and K116. L-homocysteine-binding positions include 436 to 438 (IGS) and E489. L-methionine-binding positions include 436–438 (IGS) and E489. 5-methyltetrahydropteroyltri-L-glutamate is bound by residues 520-521 (RC) and W566. L-homocysteine is bound at residue D604. D604 provides a ligand contact to L-methionine. E610 contacts 5-methyltetrahydropteroyltri-L-glutamate. Zn(2+) is bound by residues H646, C648, and E670. H699 serves as the catalytic Proton donor. C731 is a binding site for Zn(2+).

The protein belongs to the vitamin-B12 independent methionine synthase family. Zn(2+) serves as cofactor.

The enzyme catalyses 5-methyltetrahydropteroyltri-L-glutamate + L-homocysteine = tetrahydropteroyltri-L-glutamate + L-methionine. Its pathway is amino-acid biosynthesis; L-methionine biosynthesis via de novo pathway; L-methionine from L-homocysteine (MetE route): step 1/1. Its function is as follows. Catalyzes the transfer of a methyl group from 5-methyltetrahydrofolate to homocysteine resulting in methionine formation. In Xylella fastidiosa (strain 9a5c), this protein is 5-methyltetrahydropteroyltriglutamate--homocysteine methyltransferase.